The chain runs to 1908 residues: Putative ankyrin repeat protein L484 (1908 aa).

5 ANK repeats span residues 20-50 (DIMEQFFLTIKTGDIDKIRNFVAQNKNKFNI), 60-97 (PNKTPIHAVLELDDRIADQETKLTIIKYLDKMGAPMDL), 101-130 (DNVWPIHLAAADQDEDIIDYMLKNKVSIDR), 134-167 (SNNTPLHYAVYGKQVPCFDKVKVGSIVPPQDIDK), and 1370-1399 (DGNTPLHLAISMTNPDIVEILLKHGANPFT). The stretch at 1539–1603 (VQLLNPKLRD…QTNISDLEFK (65 aa)) forms a coiled coil.

The protein resides in the virion. The chain is Putative ankyrin repeat protein L484 from Acanthamoeba polyphaga mimivirus (APMV).